Consider the following 705-residue polypeptide: Catalase C (705 aa).

The disordered stretch occupies residues 1–31 (MAKKPSAPNNTKPATIHDQKATRGNGGELHQ). Residues His-88 and Asn-161 contribute to the active site. Position 375 (Tyr-375) interacts with heme.

This sequence belongs to the catalase family. HPII subfamily. Requires heme as cofactor.

The catalysed reaction is 2 H2O2 = O2 + 2 H2O. Decomposes hydrogen peroxide into water and oxygen; serves to protect cells from the toxic effects of hydrogen peroxide. Could protect cells in nodules which have a high potential to produce hydrogen peroxide because of the strong reducing conditions required for nitrogen fixation and the action of several proteins. The sequence is that of Catalase C (katE) from Rhizobium meliloti (strain 1021) (Ensifer meliloti).